Reading from the N-terminus, the 544-residue chain is Esterase P (544 aa).

An N-terminal signal peptide occupies residues 1–19 (MSIFKRLLCLTLLWIAALE). N-linked (GlcNAc...) asparagine glycosylation occurs at Asn-75. An intrachain disulfide couples Cys-83 to Cys-102. N-linked (GlcNAc...) asparagine glycosylation is present at Asn-114. Catalysis depends on Ser-206, which acts as the Acyl-ester intermediate. A disulfide bridge connects residues Cys-258 and Cys-270. Residues Asn-262 and Asn-456 are each glycosylated (N-linked (GlcNAc...) asparagine). His-466 (charge relay system) is an active-site residue. An intrachain disulfide couples Cys-514 to Cys-535.

Belongs to the type-B carboxylesterase/lipase family. In terms of assembly, monomer.

The protein resides in the secreted. The catalysed reaction is a carboxylic ester + H2O = an alcohol + a carboxylate + H(+). This chain is Esterase P (Est-P), found in Drosophila melanogaster (Fruit fly).